Here is a 75-residue protein sequence, read N- to C-terminus: MAFLKKSLFLVLFLGLVSLSMCEEEKRENEVEEEQEDDEQSELRRSLWSSIKDMAAAAGRAALNAVNGILNPGEQ.

The N-terminal stretch at Met-1–Cys-22 is a signal peptide. A propeptide spanning residues Glu-23 to Arg-45 is cleaved from the precursor. Pro-72 is modified (proline amide). Residues Glu-74–Gln-75 constitute a propeptide that is removed on maturation.

This sequence belongs to the frog skin active peptide (FSAP) family. Dermaseptin subfamily. As to expression, expressed by the skin glands.

The protein localises to the secreted. The protein resides in the target cell membrane. Its function is as follows. Antimicrobial peptide with activity against Gram-positive and Gram-negative bacteria and fungi. Has been tested against E.coli (MIC=47.25-128 uM), S.aureus (MIC=189-512 uM), K.pneumoniae (MIC=189 uM) and C.albicans (MIC&gt;189 uM). Probably acts by disturbing membrane functions with its alpha-helical amphipathic structure. May penetrate bacterial membranes, but stay at the mammalian membrane surface. Shows a weak hemolytic activity. The polypeptide is Dermaseptin-SP4 (Agalychnis spurrelli (Gliding leaf frog)).